The following is a 76-amino-acid chain: Acyl carrier protein (76 aa).

The Carrier domain maps to 1–76 (MATFDDVKDV…AAVDYIDNNQ (76 aa)). S36 is modified (O-(pantetheine 4'-phosphoryl)serine).

It belongs to the acyl carrier protein (ACP) family. 4'-phosphopantetheine is transferred from CoA to a specific serine of apo-ACP by AcpS. This modification is essential for activity because fatty acids are bound in thioester linkage to the sulfhydryl of the prosthetic group.

The protein localises to the cytoplasm. The protein operates within lipid metabolism; fatty acid biosynthesis. Functionally, carrier of the growing fatty acid chain in fatty acid biosynthesis. This Deinococcus radiodurans (strain ATCC 13939 / DSM 20539 / JCM 16871 / CCUG 27074 / LMG 4051 / NBRC 15346 / NCIMB 9279 / VKM B-1422 / R1) protein is Acyl carrier protein.